A 181-amino-acid polypeptide reads, in one-letter code: Adenine phosphoribosyltransferase (181 aa).

It belongs to the purine/pyrimidine phosphoribosyltransferase family. Homodimer.

The protein localises to the cytoplasm. The enzyme catalyses AMP + diphosphate = 5-phospho-alpha-D-ribose 1-diphosphate + adenine. The protein operates within purine metabolism; AMP biosynthesis via salvage pathway; AMP from adenine: step 1/1. Catalyzes a salvage reaction resulting in the formation of AMP, that is energically less costly than de novo synthesis. The chain is Adenine phosphoribosyltransferase from Brucella abortus (strain S19).